A 190-amino-acid chain; its full sequence is uncharacterized protein (190 aa).

Over 1-16 (MAILPEFISQTPPVTR) the chain is Cytoplasmic. Residues 17 to 37 (YIVLGTLFTTLAVNFGYVSDL) form a helical membrane-spanning segment. At 38–55 (KIFFNWKLFLAKGEYWRA) the chain is on the lumenal side. The chain crosses the membrane as a helical span at residues 56-76 (ITTFLYVGPFGLELILYLSFL). The Cytoplasmic portion of the chain corresponds to 77–98 (LRFMSMLERSSPPPQTQSFLKT). A helical transmembrane segment spans residues 99 to 119 (VLIVWFSLLVTSYFSYMPFAA). Residues 120–138 (SYFSFTMLYIWSWKHPLYR) are Lumenal-facing. The chain crosses the membrane as a helical span at residues 139–159 (ISILGLFDVKAPYVPWVMVLL). Residues 160–163 (RWLR) are Cytoplasmic-facing. Residues 164–184 (TGIFPLLDLISALIGHVYFFV) form a helical membrane-spanning segment. Residues 185 to 190 (TDFSTV) are Lumenal-facing.

Belongs to the derlin family.

It is found in the endoplasmic reticulum membrane. This is an uncharacterized protein from Schizosaccharomyces pombe (strain 972 / ATCC 24843) (Fission yeast).